Here is a 148-residue protein sequence, read N- to C-terminus: 3-hydroxyacyl-[acyl-carrier-protein] dehydratase FabZ (148 aa).

Residue histidine 48 is part of the active site.

It belongs to the thioester dehydratase family. FabZ subfamily.

It localises to the cytoplasm. The enzyme catalyses a (3R)-hydroxyacyl-[ACP] = a (2E)-enoyl-[ACP] + H2O. Its function is as follows. Involved in unsaturated fatty acids biosynthesis. Catalyzes the dehydration of short chain beta-hydroxyacyl-ACPs and long chain saturated and unsaturated beta-hydroxyacyl-ACPs. The polypeptide is 3-hydroxyacyl-[acyl-carrier-protein] dehydratase FabZ (Campylobacter concisus (strain 13826)).